Here is a 546-residue protein sequence, read N- to C-terminus: (-)-5-epieremophilene synthase STPS3 (546 aa).

5 residues coordinate Mg(2+): Asp-299, Asp-303, Asp-442, Thr-446, and Glu-450. The short motif at 299-303 (DDTYD) is the DDXXD motif element.

It belongs to the terpene synthase family. Tpsa subfamily. Monomer. It depends on Mg(2+) as a cofactor. Highly expressed in flowers and at lower levels in leaves.

It carries out the reaction (2E,6E)-farnesyl diphosphate = (-)-5-epi-eremophilene + diphosphate. It participates in secondary metabolite biosynthesis; terpenoid biosynthesis. Functionally, sesquiterpene synthase that catalyzes the conversion of farnesyl diphosphate to (-)-5-epi-eremophilene. The polypeptide is (-)-5-epieremophilene synthase STPS3 (Salvia miltiorrhiza (Chinese sage)).